The primary structure comprises 395 residues: RNA pseudouridine synthase 7 (395 aa).

Residues 1 to 21 are disordered; the sequence is MKRKQQEDDNDDGVEKAVSPV. Positions 74–136 constitute an S4 RNA-binding domain; that stretch reads KTIVDLFADE…HEPPVMIDDV (63 aa). The active site involves D187. Over residues 244 to 255 the composition is skewed to polar residues; the sequence is EGRSTAEDANSS. Residues 244–263 form a disordered region; it reads EGRSTAEDANSSGDDKKVKG.

Belongs to the pseudouridine synthase RluA family.

It catalyses the reaction a uridine in RNA = a pseudouridine in RNA. In Arabidopsis thaliana (Mouse-ear cress), this protein is RNA pseudouridine synthase 7.